A 736-amino-acid polypeptide reads, in one-letter code: Polyribonucleotide nucleotidyltransferase (736 aa).

Positions 488 and 494 each coordinate Mg(2+). The region spanning 555–614 is the KH domain; sequence PMVQTLEIQKEKIRDVIGLGGKVIKELCKTFDVEIDISENGEVKVWGNVGENVKKAVQSI. One can recognise an S1 motif domain in the interval 624-692; the sequence is GDIFDGEVVK…HKNRVKLTLR (69 aa).

This sequence belongs to the polyribonucleotide nucleotidyltransferase family. The cofactor is Mg(2+).

The protein localises to the cytoplasm. It catalyses the reaction RNA(n+1) + phosphate = RNA(n) + a ribonucleoside 5'-diphosphate. Functionally, involved in mRNA degradation. Catalyzes the phosphorolysis of single-stranded polyribonucleotides processively in the 3'- to 5'-direction. In Orientia tsutsugamushi (strain Ikeda) (Rickettsia tsutsugamushi), this protein is Polyribonucleotide nucleotidyltransferase.